Consider the following 172-residue polypeptide: Small ribosomal subunit protein uS5 (172 aa).

The region spanning 16–79 (LKDRLVAINR…ESAKKNLTRV (64 aa)) is the S5 DRBM domain.

The protein belongs to the universal ribosomal protein uS5 family. In terms of assembly, part of the 30S ribosomal subunit. Contacts proteins S4 and S8.

With S4 and S12 plays an important role in translational accuracy. Its function is as follows. Located at the back of the 30S subunit body where it stabilizes the conformation of the head with respect to the body. This chain is Small ribosomal subunit protein uS5, found in Bacteroides fragilis (strain ATCC 25285 / DSM 2151 / CCUG 4856 / JCM 11019 / LMG 10263 / NCTC 9343 / Onslow / VPI 2553 / EN-2).